We begin with the raw amino-acid sequence, 422 residues long: 2-(3-amino-3-carboxypropyl)histidine synthase subunit 1 (422 aa).

The [4Fe-4S] cluster site is built by Cys-128, Cys-234, and Cys-363.

This sequence belongs to the DPH1/DPH2 family. DPH1 subfamily. As to quaternary structure, component of the 2-(3-amino-3-carboxypropyl)histidine synthase complex composed of DPH1, DPH2, DPH3 and a NADH-dependent reductase, predominantly CBR1. It depends on [4Fe-4S] cluster as a cofactor.

It is found in the cytoplasm. It catalyses the reaction L-histidyl-[translation elongation factor 2] + S-adenosyl-L-methionine = 2-[(3S)-amino-3-carboxypropyl]-L-histidyl-[translation elongation factor 2] + S-methyl-5'-thioadenosine + H(+). It participates in protein modification; peptidyl-diphthamide biosynthesis. In terms of biological role, catalyzes the first step of diphthamide biosynthesis, a post-translational modification of histidine which occurs in elongation factor 2. DPH1 and DPH2 transfer a 3-amino-3-carboxypropyl (ACP) group from S-adenosyl-L-methionine (SAM) to a histidine residue, the reaction is assisted by a reduction system comprising DPH3 and a NADH-dependent reductase, predominantly CBR1. This chain is 2-(3-amino-3-carboxypropyl)histidine synthase subunit 1 (DPH1), found in Kluyveromyces lactis (strain ATCC 8585 / CBS 2359 / DSM 70799 / NBRC 1267 / NRRL Y-1140 / WM37) (Yeast).